The chain runs to 320 residues: Solute carrier family 25 member 33 (320 aa).

Solcar repeat units follow at residues 9–118 (ENTL…AKEQ), 126–213 (NSNT…LKKC), and 231–315 (SGFF…IVYL). Helical transmembrane passes span 12–32 (LLHLFAGGCGGTVGAIFTCPL), 49–65 (VYYPQVHLGTISGAGMV), 121–141 (GIFVPNSNTVHILSAGSAAFV), 190–210 (LTASYAGISETIICFAIYESL), 233–253 (FFGLMAAAAVSKGCASCIAYP), and 298–318 (QIPNTAIVLSTYEFIVYLLGE).

The protein belongs to the mitochondrial carrier (TC 2.A.29) family.

It localises to the mitochondrion inner membrane. It carries out the reaction UTP(in) + UDP(out) = UTP(out) + UDP(in). The catalysed reaction is dUTP(out) + UTP(in) = dUTP(in) + UTP(out). The enzyme catalyses 5-methyl-UTP(out) + UTP(in) = 5-methyl-UTP(in) + UTP(out). It catalyses the reaction 5-methyl-UDP(out) + UTP(in) = 5-methyl-UDP(in) + UTP(out). It carries out the reaction UTP(in) + CTP(out) = UTP(out) + CTP(in). The catalysed reaction is CDP(out) + UTP(in) = CDP(in) + UTP(out). The enzyme catalyses dCTP(out) + UTP(in) = dCTP(in) + UTP(out). It catalyses the reaction dCDP(out) + UTP(in) = dCDP(in) + UTP(out). It carries out the reaction UTP(in) + GTP(out) = UTP(out) + GTP(in). The catalysed reaction is UTP(in) + GDP(out) = UTP(out) + GDP(in). The enzyme catalyses dGTP(out) + UTP(in) = dGTP(in) + UTP(out). It catalyses the reaction dGDP(out) + UTP(in) = dGDP(in) + UTP(out). It carries out the reaction ITP(out) + UTP(in) = ITP(in) + UTP(out). Mitochondrial transporter that imports/exports pyrimidine nucleotides into and from mitochondria. Selectively transports uridine, thymidine, guanosine, cytosine and inosine (deoxy)nucleoside di- and triphosphates by an antiport mechanism. May import (deoxy)nucleoside triphosphates in exchange for intramitochondrial (deoxy)nucleoside diphosphates, thus providing precursors necessary for de novo synthesis of mitochondrial DNA and RNA while exporting products of their catabolism. Participates in mitochondrial genome maintenance, regulation of mitochondrial membrane potential and mitochondrial respiration. Upon INS or IGF1 stimulation regulates cell growth and proliferation by controlling mitochondrial DNA replication and transcription, the ratio of mitochondria-to nuclear-encoded components of the electron transport chain resulting in control of mitochondrial ROS production. Participates in dendritic cell endocytosis and may associate with mitochondrial oxidative phosphorylation. In Mus musculus (Mouse), this protein is Solute carrier family 25 member 33 (Slc25a33).